We begin with the raw amino-acid sequence, 75 residues long: Small integral membrane protein 15 (75 aa).

A helical transmembrane segment spans residues 21–41; that stretch reads YGFLITVLLALTPLFLASAVL. Residues 49-75 are a coiled coil; it reads IEAKERDQKKKQKRQENIAKAKRTKKD. The segment covering 52–67 has biased composition (basic and acidic residues); the sequence is KERDQKKKQKRQENIA. Positions 52 to 75 are disordered; the sequence is KERDQKKKQKRQENIAKAKRTKKD.

The protein belongs to the SMIM15 family.

The protein localises to the membrane. The protein is Small integral membrane protein 15 (smim15) of Xenopus laevis (African clawed frog).